Consider the following 299-residue polypeptide: HTH-type transcriptional regulator CynR (299 aa).

Residues 1 to 58 form the HTH lysR-type domain; it reads MLSRHINYFLAVAEHGSFTRAASALHVSQPALSQQIRQLEESLGVPLFDRSGRTIRLT. The H-T-H motif DNA-binding region spans 18-37; the sequence is FTRAASALHVSQPALSQQIR.

Belongs to the LysR transcriptional regulatory family.

The protein localises to the cytoplasm. In terms of biological role, positively regulates the cynTSX operon, and negatively regulates its own transcription. Binds specifically to the cynR-cynTSX intergenic region. The chain is HTH-type transcriptional regulator CynR (cynR) from Escherichia coli (strain K12).